Here is a 183-residue protein sequence, read N- to C-terminus: MKLLEKITSYEFICKMVDIYNKFVNFVAILMIPILMLTLLIAIAIIFYDLRLFVDYFLHGAVAEEYDKAFKLLVRNILNFFVLIELFKVFIDVLEFRRIRKRQIIEAGIVFVVREIILIVFEHRFTFWDLLGFGALLLALGLTYVLLEKSYMEYLKFEHREITKRERSERESLKEQRKGELKR.

Helical transmembrane passes span Phe-26–Tyr-48, Leu-72–Ile-91, Ile-104–Phe-121, and Phe-125–Leu-147.

Its subcellular location is the cell membrane. This is an uncharacterized protein from Aquifex aeolicus (strain VF5).